Here is a 974-residue protein sequence, read N- to C-terminus: Mediator of RNA polymerase II transcription subunit 16 (974 aa).

A disordered region spans residues 62-92; it reads ESSSTLSTHSTTTSVNGSTTAGVGSTPNFGG. The span at 63–75 shows a compositional bias: low complexity; it reads SSSTLSTHSTTTS. The span at 76 to 92 shows a compositional bias: polar residues; sequence VNGSTTAGVGSTPNFGG. The short motif at 889 to 893 is the Nuclear localization signal element; the sequence is KLPIK.

It belongs to the Mediator complex subunit 16 family. As to quaternary structure, component of the Mediator complex, which is composed of at least 21 subunits that form three structurally distinct submodules. The Mediator head module contains MED6, MED8, MED11, SRB4/MED17, SRB5/MED18, ROX3/MED19, SRB2/MED20 and SRB6/MED22, the middle module contains MED1, MED4, NUT1/MED5, MED7, CSE2/MED9, NUT2/MED10, SRB7/MED21 and SOH1/MED31, and the tail module contains MED2, PGD1/MED3, RGR1/MED14, GAL11/MED15 and SIN4/MED16. The head and the middle modules interact directly with RNA polymerase II, whereas the elongated tail module interacts with gene-specific regulatory proteins. Interacts with HOG1. Post-translationally, phosphorylated by KIN28.

Its subcellular location is the nucleus. Component of the Mediator complex, a coactivator involved in the regulated transcription of nearly all RNA polymerase II-dependent genes. Mediator functions as a bridge to convey information from gene-specific regulatory proteins to the basal RNA polymerase II transcription machinery. The Mediator complex, having a compact conformation in its free form, is recruited to promoters by direct interactions with regulatory proteins and serves for the assembly of a functional preinitiation complex with RNA polymerase II and the general transcription factors. The Mediator complex unfolds to an extended conformation and partially surrounds RNA polymerase II, specifically interacting with the unphosphorylated form of the C-terminal domain (CTD) of RNA polymerase II. The Mediator complex dissociates from the RNA polymerase II holoenzyme and stays at the promoter when transcriptional elongation begins. The polypeptide is Mediator of RNA polymerase II transcription subunit 16 (SIN4) (Saccharomyces cerevisiae (strain ATCC 204508 / S288c) (Baker's yeast)).